We begin with the raw amino-acid sequence, 1587 residues long: Pentafunctional AROM polypeptide (1587 aa).

The segment at M1–N384 is 3-dehydroquinate synthase. NAD(+)-binding positions include D44–N46, E81–K84, G114–V116, and D119. 7-phospho-2-dehydro-3-deoxy-D-arabino-heptonate is bound at residue R130. NAD(+) is bound at residue T139–T140. Residues D146 and K152 each coordinate 7-phospho-2-dehydro-3-deoxy-D-arabino-heptonate. Residue K161 participates in NAD(+) binding. Position 162 (N162) interacts with 7-phospho-2-dehydro-3-deoxy-D-arabino-heptonate. NAD(+) contacts are provided by residues F179–T182 and N190. E194 serves as a coordination point for Zn(2+). 7-phospho-2-dehydro-3-deoxy-D-arabino-heptonate contacts are provided by residues E194–K197 and K250. E260 functions as the Proton acceptor; for 3-dehydroquinate synthase activity in the catalytic mechanism. 7-phospho-2-dehydro-3-deoxy-D-arabino-heptonate is bound by residues R264–N268 and H271. H271 contacts Zn(2+). H275 (proton acceptor; for 3-dehydroquinate synthase activity) is an active-site residue. Positions 287 and 356 each coordinate 7-phospho-2-dehydro-3-deoxy-D-arabino-heptonate. H287 is a binding site for Zn(2+). The tract at residues V397 to V842 is EPSP synthase. The For EPSP synthase activity role is filled by C824. The tract at residues S864–S1055 is shikimate kinase. G871 to T878 contributes to the ATP binding site. Residues L1056–E1276 are 3-dehydroquinase. The Proton acceptor; for 3-dehydroquinate dehydratase activity role is filled by H1179. Residue K1207 is the Schiff-base intermediate with substrate; for 3-dehydroquinate dehydratase activity of the active site. The tract at residues K1289 to D1587 is shikimate dehydrogenase.

In the N-terminal section; belongs to the sugar phosphate cyclases superfamily. Dehydroquinate synthase family. The protein in the 2nd section; belongs to the EPSP synthase family. It in the 3rd section; belongs to the shikimate kinase family. This sequence in the 4th section; belongs to the type-I 3-dehydroquinase family. In the C-terminal section; belongs to the shikimate dehydrogenase family. In terms of assembly, homodimer. Requires Zn(2+) as cofactor.

The protein resides in the cytoplasm. It carries out the reaction 7-phospho-2-dehydro-3-deoxy-D-arabino-heptonate = 3-dehydroquinate + phosphate. The catalysed reaction is 3-dehydroquinate = 3-dehydroshikimate + H2O. It catalyses the reaction shikimate + NADP(+) = 3-dehydroshikimate + NADPH + H(+). The enzyme catalyses shikimate + ATP = 3-phosphoshikimate + ADP + H(+). It carries out the reaction 3-phosphoshikimate + phosphoenolpyruvate = 5-O-(1-carboxyvinyl)-3-phosphoshikimate + phosphate. It functions in the pathway metabolic intermediate biosynthesis; chorismate biosynthesis; chorismate from D-erythrose 4-phosphate and phosphoenolpyruvate: step 2/7. The protein operates within metabolic intermediate biosynthesis; chorismate biosynthesis; chorismate from D-erythrose 4-phosphate and phosphoenolpyruvate: step 3/7. It participates in metabolic intermediate biosynthesis; chorismate biosynthesis; chorismate from D-erythrose 4-phosphate and phosphoenolpyruvate: step 4/7. Its pathway is metabolic intermediate biosynthesis; chorismate biosynthesis; chorismate from D-erythrose 4-phosphate and phosphoenolpyruvate: step 5/7. It functions in the pathway metabolic intermediate biosynthesis; chorismate biosynthesis; chorismate from D-erythrose 4-phosphate and phosphoenolpyruvate: step 6/7. The AROM polypeptide catalyzes 5 consecutive enzymatic reactions in prechorismate polyaromatic amino acid biosynthesis. The polypeptide is Pentafunctional AROM polypeptide (Aspergillus clavatus (strain ATCC 1007 / CBS 513.65 / DSM 816 / NCTC 3887 / NRRL 1 / QM 1276 / 107)).